The following is a 157-amino-acid chain: MFIRVCNRLIYTPTNVLLITVEDGRISVLLWFRYAIPAELCYTRLARILRGKHCADFPQSCCHNISRFGVLNKSVLGSFNQWLGGISKERKLIARTFDAFIRWSSTRGEEVTTYFFLQKKSVTFSVARRLSGRQQWEAQRKNNNNGKRNYLLSVTFV.

This is an uncharacterized protein from Saccharomyces cerevisiae (strain ATCC 204508 / S288c) (Baker's yeast).